A 925-amino-acid chain; its full sequence is Coronin-7 (925 aa).

WD repeat units follow at residues 75-115 (CHSD…QALP), 124-163 (PEDL…PLTE), 166-205 (AHGD…QASQ), and 209-253 (AHEN…SALA). Disordered regions lie at residues 196 to 216 (DPRT…SRDS) and 399 to 465 (LVPP…SLQS). Residues 201-210 (PQASQSTQAH) are compositionally biased toward polar residues. Positions 429–460 (SSPPSSLTSPSTPSSLGPTLSSTSGIGTGPSL) are enriched in low complexity. S462 and S465 each carry phosphoserine. A Glycyl lysine isopeptide (Lys-Gly) (interchain with G-Cter in ubiquitin) cross-link involves residue K472. 3 WD repeats span residues 542–582 (QNGA…LEEV), 592–632 (GHME…DRLK), and 635–674 (GHQD…EPLQ). K680 is covalently cross-linked (Glycyl lysine isopeptide (Lys-Gly) (interchain with G-Cter in ubiquitin)). The stretch at 728–768 (DVAPSTLVPSYEPRHWPGAPDWQGDARVFLYELLPESPFFM) is one WD 8 repeat. Positions 857-925 (LQPPDMSPVS…FEGVDEDEWD (69 aa)) are disordered. Residues 866-882 (SQAPREAPARRAPSSAQ) are compositionally biased toward low complexity. Basic and acidic residues predominate over residues 884–896 (LEEKSDQQKKEEL). S915 carries the post-translational modification Phosphoserine.

Belongs to the WD repeat coronin family. In terms of assembly, interacts with clathrin adapter AP1 complex. This interaction takes place at Golgi membranes and not AP1-positive endosomal membranes. Interacts (when ubiquitinated at Lys-472) with EPS15. In terms of processing, the membrane-associated form is phosphorylated on tyrosine residues. Ubiquitinated via 'Lys-33'-linked ubiquitin chains by the BCR(KLHL20) E3 ubiquitin ligase complex: 'Lys-33'-linked ubiquitination promotes interaction with EPS15 and facilitates actin polymerization at the trans-Golgi network, thereby facilitating post-Golgi trafficking. Deubiquitinated by ZRANB1/TRABID.

It is found in the golgi apparatus membrane. Its subcellular location is the golgi apparatus. The protein localises to the trans-Golgi network. The protein resides in the cytoplasmic vesicle. It localises to the cytoplasm. It is found in the cytosol. Its function is as follows. F-actin regulator involved in anterograde Golgi to endosome transport: upon ubiquitination via 'Lys-33'-linked ubiquitin chains by the BCR(KLHL20) E3 ubiquitin ligase complex, interacts with EPS15 and localizes to the trans-Golgi network, where it promotes actin polymerization, thereby facilitating post-Golgi trafficking. May play a role in the maintenance of the Golgi apparatus morphology. The protein is Coronin-7 (CORO7) of Pongo abelii (Sumatran orangutan).